We begin with the raw amino-acid sequence, 113 residues long: Retrotransposon Gag-like protein 8B (113 aa).

The protein belongs to the FAM127 family.

This chain is Retrotransposon Gag-like protein 8B (RTL8B), found in Homo sapiens (Human).